Here is a 592-residue protein sequence, read N- to C-terminus: Cyclin-dependent kinase-like 3 (592 aa).

The region spanning 4–286 is the Protein kinase domain; sequence YETLGKVGEG…SSDLLHHEYF (283 aa). ATP is bound by residues 10 to 18 and lysine 33; that span reads VGEGSYGTV. A [NKR]KIAxRE motif is present at residues 44–50; sequence NKIAMRE. Residue aspartate 125 is the Proton acceptor of the active site. Position 158 is a phosphothreonine (threonine 158). Tyrosine 160 carries the post-translational modification Phosphotyrosine. The segment covering 368–379 has biased composition (basic and acidic residues); it reads GDISEPKKKEYE. 2 disordered regions span residues 368 to 390 and 459 to 485; these read GDIS…ANEN and RAKK…PGPI. The span at 466 to 477 shows a compositional bias: polar residues; it reads SSQSIGQVMPNS.

This sequence belongs to the protein kinase superfamily. CMGC Ser/Thr protein kinase family. CDC2/CDKX subfamily.

The protein localises to the cytoplasm. It catalyses the reaction L-seryl-[protein] + ATP = O-phospho-L-seryl-[protein] + ADP + H(+). It carries out the reaction L-threonyl-[protein] + ATP = O-phospho-L-threonyl-[protein] + ADP + H(+). The polypeptide is Cyclin-dependent kinase-like 3 (Homo sapiens (Human)).